The following is a 256-amino-acid chain: D-aminoacyl-tRNA deacylase (256 aa).

The protein belongs to the DtdA deacylase family. In terms of assembly, monomer. Zn(2+) is required as a cofactor.

The enzyme catalyses a D-aminoacyl-tRNA + H2O = a tRNA + a D-alpha-amino acid + H(+). It catalyses the reaction glycyl-tRNA(Ala) + H2O = tRNA(Ala) + glycine + H(+). Functionally, D-aminoacyl-tRNA deacylase with broad substrate specificity. By recycling D-aminoacyl-tRNA to D-amino acids and free tRNA molecules, this enzyme counteracts the toxicity associated with the formation of D-aminoacyl-tRNA entities in vivo. This Thermoplasma acidophilum (strain ATCC 25905 / DSM 1728 / JCM 9062 / NBRC 15155 / AMRC-C165) protein is D-aminoacyl-tRNA deacylase.